Reading from the N-terminus, the 190-residue chain is dCTP deaminase (190 aa).

113-118 (KSTYAR) lines the dCTP pocket. Glu139 serves as the catalytic Proton donor/acceptor. 4 residues coordinate dCTP: Gln158, Tyr172, Lys181, and Gln182.

Belongs to the dCTP deaminase family. Homotrimer.

The enzyme catalyses dCTP + H2O + H(+) = dUTP + NH4(+). The protein operates within pyrimidine metabolism; dUMP biosynthesis; dUMP from dCTP (dUTP route): step 1/2. Catalyzes the deamination of dCTP to dUTP. This Chlamydia trachomatis serovar L2 (strain ATCC VR-902B / DSM 19102 / 434/Bu) protein is dCTP deaminase.